A 227-amino-acid chain; its full sequence is Pectinesterase inhibitor 28 (227 aa).

The N-terminal stretch at 1 to 25 (MASSMAPAAAMAILLLALLMPATLC) is a signal peptide. The segment at 28–50 (SGPPSSKHGHGGHAKRAPPPASP) is disordered. Basic residues predominate over residues 34 to 43 (KHGHGGHAKR). An intrachain disulfide couples cysteine 66 to cysteine 75. N-linked (GlcNAc...) asparagine glycosylation is found at asparagine 67, asparagine 104, and asparagine 117. Cysteines 139 and 179 form a disulfide.

The protein belongs to the PMEI family. As to expression, expressed in roots, leaves, culms and flag leaves.

The protein resides in the secreted. The protein localises to the extracellular space. It localises to the apoplast. Functionally, pectin methylesterase (PME) inhibitor that inhibits PME in vitro. Functions as a critical structural modulator by regulating the degree of pectin methylesterification and the physiochemical properties of the cell wall components. In Oryza sativa subsp. japonica (Rice), this protein is Pectinesterase inhibitor 28.